The sequence spans 498 residues: Probable cytosol aminopeptidase (498 aa).

2 residues coordinate Mn(2+): Lys269 and Asp274. The active site involves Lys281. Residues Asp292, Asp351, and Glu353 each contribute to the Mn(2+) site. Residue Arg355 is part of the active site.

This sequence belongs to the peptidase M17 family. Mn(2+) serves as cofactor.

It is found in the cytoplasm. It carries out the reaction Release of an N-terminal amino acid, Xaa-|-Yaa-, in which Xaa is preferably Leu, but may be other amino acids including Pro although not Arg or Lys, and Yaa may be Pro. Amino acid amides and methyl esters are also readily hydrolyzed, but rates on arylamides are exceedingly low.. The catalysed reaction is Release of an N-terminal amino acid, preferentially leucine, but not glutamic or aspartic acids.. Functionally, presumably involved in the processing and regular turnover of intracellular proteins. Catalyzes the removal of unsubstituted N-terminal amino acids from various peptides. In Glaesserella parasuis serovar 5 (strain SH0165) (Haemophilus parasuis), this protein is Probable cytosol aminopeptidase.